We begin with the raw amino-acid sequence, 688 residues long: Glycine--tRNA ligase beta subunit (688 aa).

Belongs to the class-II aminoacyl-tRNA synthetase family. In terms of assembly, tetramer of two alpha and two beta subunits.

The protein localises to the cytoplasm. The enzyme catalyses tRNA(Gly) + glycine + ATP = glycyl-tRNA(Gly) + AMP + diphosphate. This Shewanella oneidensis (strain ATCC 700550 / JCM 31522 / CIP 106686 / LMG 19005 / NCIMB 14063 / MR-1) protein is Glycine--tRNA ligase beta subunit.